The following is a 629-amino-acid chain: Polyadenylate-binding protein, cytoplasmic and nuclear (629 aa).

The segment at 1–47 (MTLENKAEASPATKEETTTEAAPAEGEAKTESSEEKGSKEDQGDNAS) is disordered. The segment covering 26–42 (GEAKTESSEEKGSKEDQ) has biased composition (basic and acidic residues). 4 consecutive RRM domains span residues 46–124 (ASLY…WSQR), 134–211 (GNIY…PHVP), 227–304 (TNVF…RAKK), and 330–407 (VNLY…LAQR). The tract at residues 465-543 (GANPQMMMRP…RRKDGESRVA (79 aa)) is disordered. Composition is skewed to low complexity over residues 493–506 (MYGAPPQGYQQGGF) and 514–531 (GGQPPRSGQPGPQGQFRG). The PABC domain occupies 542-624 (VADSISNALE…AITAYNEYLN (83 aa)).

The protein belongs to the polyadenylate-binding protein type-1 family.

It is found in the cytoplasm. The protein localises to the nucleus. Functionally, binds the poly(A) tail of mRNA. Appears to be an important mediator of the multiple roles of the poly(A) tail in mRNA biogenesis, stability and translation. In the nucleus, involved in both mRNA cleavage and polyadenylation. Is also required for efficient mRNA export to the cytoplasm. Acts in concert with a poly(A)-specific nuclease (PAN) to affect poly(A) tail shortening, which may occur concomitantly with either nucleocytoplasmic mRNA transport or translational initiation. In the cytoplasm, stimulates translation initiation and regulates mRNA decay through translation termination-coupled poly(A) shortening, probably mediated by PAN. The chain is Polyadenylate-binding protein, cytoplasmic and nuclear (PAB1) from Yarrowia lipolytica (strain CLIB 122 / E 150) (Yeast).